A 2214-amino-acid chain; its full sequence is Non-reducing polyketide synthase dpmpA (2214 aa).

Positions 75-178 (EWIRTGDSHV…LAVCAGAWKD (104 aa)) are N-terminal acylcarrier protein transacylase domain (SAT). Residues 372-784 (DESIAIVGAS…GNNTAMIVCQ (413 aa)) form the Ketosynthase family 3 (KS3) domain. Catalysis depends on for beta-ketoacyl synthase activity residues Cys532, His667, and His707. The malonyl-CoA:ACP transacylase (MAT) domain stretch occupies residues 888–1184 (VFAGQTGHRP…AFLSARLGSP (297 aa)). Ser974 serves as the catalytic For acyl/malonyl transferase activity. An N-terminal hotdog fold region spans residues 1255 to 1389 (PQLVSVVRSS…GIIKSQEQDR (135 aa)). Residues 1255 to 1566 (PQLVSVVRSS…FSKVPVRSLQ (312 aa)) enclose the PKS/mFAS DH domain. The interval 1265–1560 (GGADPEAAEF…AILGARFSKV (296 aa)) is product template (PT) domain. The interval 1416–1566 (GASVVQGAFV…FSKVPVRSLQ (151 aa)) is C-terminal hotdog fold. Carrier domains follow at residues 1620 to 1695 (NEVK…HSRL) and 1722 to 1802 (KAST…SGAD). O-(pantetheine 4'-phosphoryl)serine is present on Ser1654. The tract at residues 1698 to 1728 (VPQLSPHDTDRSSDLSAGQPPSTPKASTQEQ) is disordered. The segment covering 1711–1726 (DLSAGQPPSTPKASTQ) has biased composition (polar residues). An O-(pantetheine 4'-phosphoryl)serine modification is found at Ser1762. Positions 1805 to 1827 (GFPRTSDNRRSEEGSVGHVGPEK) are disordered. A compositionally biased stretch (basic and acidic residues) spans 1810-1827 (SDNRRSEEGSVGHVGPEK). The methyltransferase (CMeT) domain stretch occupies residues 1958-2210 (FPAYRPDHRL…SREADLFRWI (253 aa)).

The protein operates within secondary metabolite biosynthesis; terpenoid biosynthesis. In terms of biological role, non-reducing polyketide synthase; part of the gene cluster that mediates the biosynthesis of diterpenoid pyrones. The first step of the pathway is the synthesis of the alpha-pyrone moiety by the polyketide synthase dpmpA via condensation of one acetyl-CoA starter unit with 3 malonyl-CoA units and 2 methylations. The alpha-pyrone is then combined with geranylgeranyl pyrophosphate (GGPP) formed by the GGPP synthase dpmpD through the action of the prenyltransferase dpmpC to yield a linear alpha-pyrone diterpenoid. Subsequent steps in the diterpenoid pyrone biosynthetic pathway involve the decalin core formation, which is initiated by the epoxidation of the C10-C11 olefin by the FAD-dependent oxidoreductase dpmpE, and is followed by a cyclization cascade catalyzed by the terpene cyclase dpmpB. The short chain dehydrogenase/reductase dpmpG then oxidizes the 8S hydroxy group to a ketone and the short chain dehydrogenase/reductase dpmpH reduces the ketone to the 8R hydroxy group to yield higginsianin B. Higginsianin B is further methylated by the methyltransferase dpmpI to produce the intermediate named FDDP B. The cytochrome P450 monooxygenase dpmpJ then oxidizes the C-26 methyl to primary alcohol, producing the final diterpenoid pyrone with a C-26 primary alcohol on the gamma-pyrone moiety named FDDP C. This Macrophomina phaseolina (strain MS6) (Charcoal rot fungus) protein is Non-reducing polyketide synthase dpmpA.